The primary structure comprises 230 residues: MSDPALIADGYAAADIRAAEAPLLAAGAQLMRVAAAGLARACRALAPDGPVLVLVGAGNNGGDALLAAAELAREGREVGVIRTAGRIHEAGAAQAVAAGVPITSADELDDATLADIARSSALVVDGILGIGTTDSPALRGEGRRVVAALLPVVTAEGGPAVIACDIPSGVGCDDGAVPDPAVLPADVTVTFGAGKAGLMQGPGRALAGRVELVDVGLDLSGATPLVRAAR.

The YjeF N-terminal domain maps to 11–223; the sequence is YAAADIRAAE…DVGLDLSGAT (213 aa). A (6S)-NADPHX-binding site is contributed by 59 to 63; that stretch reads NNGGD. Residues asparagine 60 and aspartate 125 each coordinate K(+). (6S)-NADPHX is bound by residues 129–137 and aspartate 165; that span reads GIGTTDSPA. Serine 168 contributes to the K(+) binding site.

It belongs to the NnrE/AIBP family. It depends on K(+) as a cofactor.

The catalysed reaction is (6R)-NADHX = (6S)-NADHX. The enzyme catalyses (6R)-NADPHX = (6S)-NADPHX. Its function is as follows. Catalyzes the epimerization of the S- and R-forms of NAD(P)HX, a damaged form of NAD(P)H that is a result of enzymatic or heat-dependent hydration. This is a prerequisite for the S-specific NAD(P)H-hydrate dehydratase to allow the repair of both epimers of NAD(P)HX. The chain is NAD(P)H-hydrate epimerase from Clavibacter michiganensis subsp. michiganensis (strain NCPPB 382).